A 204-amino-acid polypeptide reads, in one-letter code: Protein XpaC (204 aa).

In terms of biological role, in double copy it causes aberrant cell morphology, filamentation and inhibits sporulation. Hydrolyzes 5-bromo-4-chloroindolyl phosphate. In Bacillus subtilis (strain 168), this protein is Protein XpaC (xpaC).